Consider the following 300-residue polypeptide: Porphobilinogen deaminase (300 aa).

The residue at position 239 (Cys-239) is an S-(dipyrrolylmethanemethyl)cysteine.

The protein belongs to the HMBS family. In terms of assembly, monomer. It depends on dipyrromethane as a cofactor.

The enzyme catalyses 4 porphobilinogen + H2O = hydroxymethylbilane + 4 NH4(+). Its pathway is porphyrin-containing compound metabolism; protoporphyrin-IX biosynthesis; coproporphyrinogen-III from 5-aminolevulinate: step 2/4. Tetrapolymerization of the monopyrrole PBG into the hydroxymethylbilane pre-uroporphyrinogen in several discrete steps. The sequence is that of Porphobilinogen deaminase from Francisella tularensis subsp. holarctica (strain FTNF002-00 / FTA).